Here is a 119-residue protein sequence, read N- to C-terminus: Chorion class B protein M2807 (119 aa).

The interval 1–11 (GGLGGGCGRGF) is left arm. Residues 12–80 (SGGGLPVATA…GNGAVGITRE (69 aa)) form a central domain region. A right arm (Gly-rich tandem repeats) region spans residues 81 to 119 (GGLGYGAGYGDGYGLGYGGYGGGYGLGYGGYGGCGCGCG).

Belongs to the chorion protein family.

Its function is as follows. This protein is one of many from the eggshell of the silk moth. This is Chorion class B protein M2807 from Bombyx mori (Silk moth).